A 283-amino-acid polypeptide reads, in one-letter code: Beta-glucoside operon antiterminator (283 aa).

PRD domains are found at residues 65–170 (RIPL…SHMP) and 171–280 (EVMR…LQEQ).

This sequence belongs to the transcriptional antiterminator BglG family. In terms of processing, phosphorylated and inactivated by ArbF (EII-Bgl). The degree of phosphorylation is dependent on the presence or absence of beta-glucosides which act as inducers of the operon expression. Addition of inducer result in the rapid dephosphorylation of ArbG.

Functionally, mediates the positive regulation of the beta-glucoside (arb) operon by functioning as a transcriptional antiterminator. This is an RNA-binding protein that recognizes a specific sequence located just upstream of two termination sites within the operon. The sequence is that of Beta-glucoside operon antiterminator (arbG) from Dickeya chrysanthemi (Pectobacterium chrysanthemi).